Reading from the N-terminus, the 199-residue chain is Probable adenine phosphoribosyltransferase (199 aa).

It belongs to the purine/pyrimidine phosphoribosyltransferase family. As to quaternary structure, homodimer.

The protein localises to the cytoplasm. The enzyme catalyses AMP + diphosphate = 5-phospho-alpha-D-ribose 1-diphosphate + adenine. The protein operates within purine metabolism; AMP biosynthesis via salvage pathway; AMP from adenine: step 1/1. Catalyzes a salvage reaction resulting in the formation of AMP, that is energically less costly than de novo synthesis. The sequence is that of Probable adenine phosphoribosyltransferase (aprt) from Dictyostelium discoideum (Social amoeba).